Reading from the N-terminus, the 402-residue chain is Protein prenyltransferase alpha subunit repeat-containing protein 1 (402 aa).

Ala2 bears the N-acetylalanine mark. PFTA repeat units follow at residues 87-120 (LIDVTCTLLLLNPDFTTAWNVRKELILSGTLNPI), 122-155 (DLHLGKLALTKFPKSPETWIHRRWVLQQLIQETS), 180-213 (EMEVCGEAAGRYPSNYNAWSHRIWVLQHLAKLDV), and 219-252 (ELSSTKHWASMHVSDHSGFHYRQFLLKSLISQTV). A disordered region spans residues 263-282 (LRSEPALVPPKDEEAAVSTE). Residues 295-328 (EVEFSTDLIDSYPGHETLWCHRRHIFYLQHHLNA) form a PFTA 5 repeat.

The protein belongs to the protein prenyltransferase subunit alpha family.

The chain is Protein prenyltransferase alpha subunit repeat-containing protein 1 (PTAR1) from Homo sapiens (Human).